A 351-amino-acid polypeptide reads, in one-letter code: AA9 family lytic polysaccharide monooxygenase A (351 aa).

The first 20 residues, 1 to 20, serve as a signal peptide directing secretion; that stretch reads MSNKAATLLAALSGAALVAA. Residues His21 and His107 each contribute to the Cu(2+) site. Cys76 and Cys196 are disulfide-bonded. O2 contacts are provided by His182 and Gln191. Tyr193 is a Cu(2+) binding site. One can recognise a CBM1 domain in the interval 315 to 351; it reads GVAPKWGQCGGNGWTGPTVCASGSTCTVLNPYYSQCI.

This sequence belongs to the polysaccharide monooxygenase AA9 family. It depends on Cu(2+) as a cofactor.

Its subcellular location is the secreted. The enzyme catalyses [(1-&gt;4)-beta-D-glucosyl]n+m + reduced acceptor + O2 = 4-dehydro-beta-D-glucosyl-[(1-&gt;4)-beta-D-glucosyl]n-1 + [(1-&gt;4)-beta-D-glucosyl]m + acceptor + H2O.. Its function is as follows. Lytic polysaccharide monooxygenase (LPMO) that depolymerizes crystalline and amorphous polysaccharides via the oxidation of scissile alpha- or beta-(1-4)-glycosidic bonds, yielding C1 and C4 oxidation products. Catalysis by LPMOs requires the reduction of the active-site copper from Cu(II) to Cu(I) by a reducing agent and H(2)O(2) or O(2) as a cosubstrate. This is AA9 family lytic polysaccharide monooxygenase A from Podospora anserina (strain S / ATCC MYA-4624 / DSM 980 / FGSC 10383) (Pleurage anserina).